We begin with the raw amino-acid sequence, 479 residues long: Xylose isomerase (479 aa).

H144 is a catalytic residue. E275, E311, H314, D339, D350, D352, and Y382 together coordinate Mn(2+).

Belongs to the xylose isomerase family. Homodimer. Mn(2+) serves as cofactor.

It catalyses the reaction alpha-D-xylose = alpha-D-xylulofuranose. The chain is Xylose isomerase (XYLA) from Hordeum vulgare (Barley).